Reading from the N-terminus, the 294-residue chain is MTLKIGTRGSLLATTQSGHVRDDLRPYEAELVIVTTHGDVNMAPVERIGVGVFTQALREELHTGGCDIAVHSFKDLPTELDPRFHLVVPKRADFRDCLIARDGLSLADLPAGALIGTGAPRRISQIKALRPDVECVPLRGNIDTRMGKVTSGELDAVVLAYAGLTRVGRGDEATQVFDPQDFLPAPAQGALAVECRADDAYAREAIDSICDEQAQVCAVTERVVLNRLEAGCTAPVAAHATLNDGTLTLTAAVIALDGSKVVRRELSAPVAENVALAEELTRALIADGAATILG.

The residue at position 232 (cysteine 232) is an S-(dipyrrolylmethanemethyl)cysteine.

The protein belongs to the HMBS family. Monomer. Requires dipyrromethane as cofactor.

The enzyme catalyses 4 porphobilinogen + H2O = hydroxymethylbilane + 4 NH4(+). It participates in porphyrin-containing compound metabolism; protoporphyrin-IX biosynthesis; coproporphyrinogen-III from 5-aminolevulinate: step 2/4. In terms of biological role, tetrapolymerization of the monopyrrole PBG into the hydroxymethylbilane pre-uroporphyrinogen in several discrete steps. This Corynebacterium diphtheriae (strain ATCC 700971 / NCTC 13129 / Biotype gravis) protein is Porphobilinogen deaminase.